The chain runs to 283 residues: Gap junction beta-1 protein (283 aa).

Topologically, residues 1–22 (MNWTGLYTLLSGVNRHSTAIGR) are cytoplasmic. The chain crosses the membrane as a helical span at residues 23–45 (VWLSVIFIFRIMVLVVAAESVWG). Over 46–75 (DEKSSFICNTLQPGCNSVCYDQFFPISHVR) the chain is Extracellular. The helical transmembrane segment at 76–95 (LWSLQLILVSTPALLVAMHV) threads the bilayer. The Cytoplasmic segment spans residues 96 to 130 (AHQQHIEKKMLRLEGHGDPLHLEEVKRHKVHISGT). The chain crosses the membrane as a helical span at residues 131-153 (LWWTYVISVVFRLLFEAVFMYVF). Residues 154 to 191 (YLLYPGYAMVRLVKCDVYPCPNTVDCFVSRPTEKTVFT) lie on the Extracellular side of the membrane. Residues 192–214 (VFMLAASGICIILNVAEVVYLII) traverse the membrane as a helical segment. At 215 to 283 (RACARRAQRR…AEKSDRCSAC (69 aa)) the chain is on the cytoplasmic side. 4 positions are modified to phosphoserine: S233, S258, S266, and S277.

This sequence belongs to the connexin family. Beta-type (group I) subfamily. As to quaternary structure, a connexon is composed of a hexamer of connexins. Interacts with CNST.

The protein localises to the cell membrane. It localises to the cell junction. The protein resides in the gap junction. Functionally, one gap junction consists of a cluster of closely packed pairs of transmembrane channels, the connexons, through which materials of low MW diffuse from one cell to a neighboring cell. The chain is Gap junction beta-1 protein (GJB1) from Homo sapiens (Human).